We begin with the raw amino-acid sequence, 179 residues long: Lebocin-3 (179 aa).

The N-terminal stretch at 1 to 16 (MYKFLVFSSVLVLFFA) is a signal peptide. Residues 17–120 (QASCQRFIQP…QPIESHRNTR (104 aa)) constitute a propeptide that is removed on maturation. O-linked (GalNAc...) threonine glycosylation is present at T135. A propeptide spanning residues 153–179 (RRHASEDQEELRQYNEHFLIPRDIFQE) is cleaved from the precursor.

It belongs to the lebocin family. Post-translationally, O-glycosylation is important for the antibacterial activity of lebocin. As to expression, hemolymph. Produced in fat body.

It is found in the secreted. Antibacterial peptide. This Bombyx mori (Silk moth) protein is Lebocin-3 (LEB3).